A 1641-amino-acid chain; its full sequence is Alpha-2-macroglobulin (1641 aa).

The N-terminal stretch at methionine 1–glycine 31 is a signal peptide. Residue cysteine 32 is the site of N-palmitoyl cysteine attachment. The S-diacylglycerol cysteine moiety is linked to residue cysteine 32. A cross-link (isoglutamyl cysteine thioester (Cys-Gln)) is located at residues cysteine 1166–glutamine 1169.

Belongs to the protease inhibitor I39 (alpha-2-macroglobulin) family. Bacterial alpha-2-macroglobulin subfamily.

The protein localises to the cell membrane. Functionally, protects the bacterial cell from host peptidases. The chain is Alpha-2-macroglobulin from Xylella fastidiosa (strain Temecula1 / ATCC 700964).